The primary structure comprises 355 residues: Guanine nucleotide-binding protein G(i) subunit alpha-2 (355 aa).

The N-myristoyl glycine moiety is linked to residue Gly-2. The S-palmitoyl cysteine moiety is linked to residue Cys-3. One can recognise a G-alpha domain in the interval 32 to 355 (REVKLLLLGA…KNNLKDCGLF (324 aa)). The segment at 35-48 (KLLLLGAGESGKST) is G1 motif. GTP is bound by residues 40–47 (GAGESGKS), 176–182 (LRTRVKT), 201–205 (DVGGQ), 270–273 (NKKD), and Ala-327. Mg(2+) contacts are provided by Ser-47 and Thr-182. The G2 motif stretch occupies residues 174-182 (DVLRTRVKT). Residues 197–206 (FKMFDVGGQR) form a G3 motif region. Positions 266–273 (ILFLNKKD) are G4 motif. Residues 325-330 (TCATDT) are G5 motif.

The protein belongs to the G-alpha family. G(i/o/t/z) subfamily. As to quaternary structure, g proteins are composed of 3 units; alpha, beta and gamma. The alpha chain contains the guanine nucleotide binding site.

The protein localises to the cytoplasm. The protein resides in the cytoskeleton. It is found in the microtubule organizing center. Its subcellular location is the centrosome. It localises to the cell membrane. In terms of biological role, guanine nucleotide-binding proteins (G proteins) are involved as modulators or transducers in various transmembrane signaling systems. The G(i) proteins are involved in hormonal regulation of adenylate cyclase: they inhibit the cyclase in response to beta-adrenergic stimuli. May play a role in cell division. The sequence is that of Guanine nucleotide-binding protein G(i) subunit alpha-2 (GNAI2) from Gallus gallus (Chicken).